We begin with the raw amino-acid sequence, 147 residues long: Putative protein CLUHP3 (147 aa).

Residues 14 to 47 form a disordered region; that stretch reads KEPEGGRRRLSHPGNMGWMRPSQETTPPDRSHHS.

This chain is Putative protein CLUHP3 (CLUHP3), found in Homo sapiens (Human).